Consider the following 314-residue polypeptide: 4-hydroxy-3-methylbut-2-enyl diphosphate reductase (314 aa).

C12 lines the [4Fe-4S] cluster pocket. The (2E)-4-hydroxy-3-methylbut-2-enyl diphosphate site is built by H41 and H74. H41 and H74 together coordinate dimethylallyl diphosphate. H41 and H74 together coordinate isopentenyl diphosphate. C96 contributes to the [4Fe-4S] cluster binding site. H124 lines the (2E)-4-hydroxy-3-methylbut-2-enyl diphosphate pocket. Residue H124 coordinates dimethylallyl diphosphate. Position 124 (H124) interacts with isopentenyl diphosphate. E126 functions as the Proton donor in the catalytic mechanism. T168 is a binding site for (2E)-4-hydroxy-3-methylbut-2-enyl diphosphate. C198 is a binding site for [4Fe-4S] cluster. 4 residues coordinate (2E)-4-hydroxy-3-methylbut-2-enyl diphosphate: S226, S227, N228, and S270. 4 residues coordinate dimethylallyl diphosphate: S226, S227, N228, and S270. Isopentenyl diphosphate-binding residues include S226, S227, N228, and S270.

The protein belongs to the IspH family. [4Fe-4S] cluster is required as a cofactor.

It carries out the reaction isopentenyl diphosphate + 2 oxidized [2Fe-2S]-[ferredoxin] + H2O = (2E)-4-hydroxy-3-methylbut-2-enyl diphosphate + 2 reduced [2Fe-2S]-[ferredoxin] + 2 H(+). The enzyme catalyses dimethylallyl diphosphate + 2 oxidized [2Fe-2S]-[ferredoxin] + H2O = (2E)-4-hydroxy-3-methylbut-2-enyl diphosphate + 2 reduced [2Fe-2S]-[ferredoxin] + 2 H(+). It participates in isoprenoid biosynthesis; dimethylallyl diphosphate biosynthesis; dimethylallyl diphosphate from (2E)-4-hydroxy-3-methylbutenyl diphosphate: step 1/1. Its pathway is isoprenoid biosynthesis; isopentenyl diphosphate biosynthesis via DXP pathway; isopentenyl diphosphate from 1-deoxy-D-xylulose 5-phosphate: step 6/6. In terms of biological role, catalyzes the conversion of 1-hydroxy-2-methyl-2-(E)-butenyl 4-diphosphate (HMBPP) into a mixture of isopentenyl diphosphate (IPP) and dimethylallyl diphosphate (DMAPP). Acts in the terminal step of the DOXP/MEP pathway for isoprenoid precursor biosynthesis. The chain is 4-hydroxy-3-methylbut-2-enyl diphosphate reductase from Pseudomonas aeruginosa (strain LESB58).